A 334-amino-acid chain; its full sequence is Ketol-acid reductoisomerase (NADP(+)) (334 aa).

Residues 1–181 (MTTVYYDQDV…GATRAGVIET (181 aa)) enclose the KARI N-terminal Rossmann domain. NADP(+)-binding positions include 25 to 28 (YGSQ), Arg-48, Ser-52, and 82 to 85 (DEIQ). Residue His-107 is part of the active site. Gly-133 serves as a coordination point for NADP(+). Residues 182–327 (TFKEETETDL…RELREMMPFI (146 aa)) enclose the KARI C-terminal knotted domain. Mg(2+) contacts are provided by Asp-190, Glu-194, Glu-226, and Glu-230. A substrate-binding site is contributed by Ser-251.

It belongs to the ketol-acid reductoisomerase family. Mg(2+) serves as cofactor.

The catalysed reaction is (2R)-2,3-dihydroxy-3-methylbutanoate + NADP(+) = (2S)-2-acetolactate + NADPH + H(+). The enzyme catalyses (2R,3R)-2,3-dihydroxy-3-methylpentanoate + NADP(+) = (S)-2-ethyl-2-hydroxy-3-oxobutanoate + NADPH + H(+). It participates in amino-acid biosynthesis; L-isoleucine biosynthesis; L-isoleucine from 2-oxobutanoate: step 2/4. Its pathway is amino-acid biosynthesis; L-valine biosynthesis; L-valine from pyruvate: step 2/4. In terms of biological role, involved in the biosynthesis of branched-chain amino acids (BCAA). Catalyzes an alkyl-migration followed by a ketol-acid reduction of (S)-2-acetolactate (S2AL) to yield (R)-2,3-dihydroxy-isovalerate. In the isomerase reaction, S2AL is rearranged via a Mg-dependent methyl migration to produce 3-hydroxy-3-methyl-2-ketobutyrate (HMKB). In the reductase reaction, this 2-ketoacid undergoes a metal-dependent reduction by NADPH to yield (R)-2,3-dihydroxy-isovalerate. The polypeptide is Ketol-acid reductoisomerase (NADP(+)) (Staphylococcus aureus (strain USA300)).